The sequence spans 957 residues: Mediator of RNA polymerase II transcription subunit 16 (957 aa).

Residues Tyr855–Arg883 are disordered.

It belongs to the Mediator complex subunit 16 family. Component of the Mediator complex.

Its subcellular location is the nucleus. Functionally, component of the Mediator complex, a coactivator involved in the regulated transcription of nearly all RNA polymerase II-dependent genes. Mediator functions as a bridge to convey information from gene-specific regulatory proteins to the basal RNA polymerase II transcription machinery. Mediator is recruited to promoters by direct interactions with regulatory proteins and serves as a scaffold for the assembly of a functional preinitiation complex with RNA polymerase II and the general transcription factors. The polypeptide is Mediator of RNA polymerase II transcription subunit 16 (sin4) (Aspergillus clavatus (strain ATCC 1007 / CBS 513.65 / DSM 816 / NCTC 3887 / NRRL 1 / QM 1276 / 107)).